A 203-amino-acid chain; its full sequence is Holliday junction branch migration complex subunit RuvA (203 aa).

The domain I stretch occupies residues M1–N64. The domain II stretch occupies residues N65–P142. The tract at residues A143 to P154 is flexible linker. Residues T155–L203 form a domain III region.

Belongs to the RuvA family. In terms of assembly, homotetramer. Forms an RuvA(8)-RuvB(12)-Holliday junction (HJ) complex. HJ DNA is sandwiched between 2 RuvA tetramers; dsDNA enters through RuvA and exits via RuvB. An RuvB hexamer assembles on each DNA strand where it exits the tetramer. Each RuvB hexamer is contacted by two RuvA subunits (via domain III) on 2 adjacent RuvB subunits; this complex drives branch migration. In the full resolvosome a probable DNA-RuvA(4)-RuvB(12)-RuvC(2) complex forms which resolves the HJ.

It localises to the cytoplasm. In terms of biological role, the RuvA-RuvB-RuvC complex processes Holliday junction (HJ) DNA during genetic recombination and DNA repair, while the RuvA-RuvB complex plays an important role in the rescue of blocked DNA replication forks via replication fork reversal (RFR). RuvA specifically binds to HJ cruciform DNA, conferring on it an open structure. The RuvB hexamer acts as an ATP-dependent pump, pulling dsDNA into and through the RuvAB complex. HJ branch migration allows RuvC to scan DNA until it finds its consensus sequence, where it cleaves and resolves the cruciform DNA. The polypeptide is Holliday junction branch migration complex subunit RuvA (Salmonella agona (strain SL483)).